A 220-amino-acid polypeptide reads, in one-letter code: UPF0319 protein Ent638_1476 (220 aa).

A signal peptide spans 1-20 (MKTGIVSAVLALVMPVCVYA).

The protein belongs to the UPF0319 family.

The sequence is that of UPF0319 protein Ent638_1476 from Enterobacter sp. (strain 638).